The primary structure comprises 110 residues: Small ribosomal subunit protein bS16 (110 aa).

Over residues 82–103 (VKKREARNNPEKAVPRKERKAQ) the composition is skewed to basic and acidic residues. The interval 82–110 (VKKREARNNPEKAVPRKERKAQAEAAAKG) is disordered.

This sequence belongs to the bacterial ribosomal protein bS16 family.

In Bradyrhizobium sp. (strain ORS 278), this protein is Small ribosomal subunit protein bS16.